A 344-amino-acid chain; its full sequence is Oxygen sensor histidine kinase NreB (344 aa).

Residues cysteine 58, cysteine 61, cysteine 73, and cysteine 76 each coordinate [4Fe-4S] cluster. Residues 147-344 (ENERKRISRE…GTIITLDIPI (198 aa)) enclose the Histidine kinase domain. The residue at position 158 (histidine 158) is a Phosphohistidine; by autocatalysis.

The cofactor is [4Fe-4S] cluster. Post-translationally, autophosphorylated.

The protein resides in the cytoplasm. The catalysed reaction is ATP + protein L-histidine = ADP + protein N-phospho-L-histidine.. In terms of biological role, member of the two-component regulatory system NreB/NreC involved in the control of dissimilatory nitrate/nitrite reduction in response to oxygen. NreB functions as a direct oxygen sensor histidine kinase which is autophosphorylated, in the absence of oxygen, probably at the conserved histidine residue, and transfers its phosphate group probably to a conserved aspartate residue of NreC. NreB/NreC activates the expression of the nitrate (narGHJI) and nitrite (nir) reductase operons, as well as the putative nitrate transporter gene narT. The chain is Oxygen sensor histidine kinase NreB (nreB) from Staphylococcus epidermidis (strain ATCC 35984 / DSM 28319 / BCRC 17069 / CCUG 31568 / BM 3577 / RP62A).